A 371-amino-acid chain; its full sequence is tRNA-specific 2-thiouridylase MnmA (371 aa).

ATP contacts are provided by residues G13–S20 and M39. The interaction with target base in tRNA stretch occupies residues N99–D101. The Nucleophile role is filled by C104. A disulfide bridge connects residues C104 and C200. G128 serves as a coordination point for ATP. Positions K150–Q152 are interaction with tRNA. C200 (cysteine persulfide intermediate) is an active-site residue. The tract at residues R308–Y309 is interaction with tRNA.

It belongs to the MnmA/TRMU family.

It localises to the cytoplasm. The catalysed reaction is S-sulfanyl-L-cysteinyl-[protein] + uridine(34) in tRNA + AH2 + ATP = 2-thiouridine(34) in tRNA + L-cysteinyl-[protein] + A + AMP + diphosphate + H(+). Its function is as follows. Catalyzes the 2-thiolation of uridine at the wobble position (U34) of tRNA, leading to the formation of s(2)U34. This chain is tRNA-specific 2-thiouridylase MnmA, found in Bacillus cytotoxicus (strain DSM 22905 / CIP 110041 / 391-98 / NVH 391-98).